The following is a 316-amino-acid chain: Lys-63-specific deubiquitinase BRCC36 (316 aa).

Ala2 bears the N-acetylalanine mark. One can recognise an MPN domain in the interval 12 to 179 (VHLESDAFLV…YTCFQSIQAQ (168 aa)). Zn(2+) is bound by residues His122, His124, and Asp135. The JAMM motif motif lies at 122-135 (HSHPHITVWPSHVD). A Phosphoserine modification is found at Ser258.

The protein belongs to the peptidase M67A family. BRCC36 subfamily. In terms of assembly, component of the ARISC complex, at least composed of UIMC1/RAP80, ABRAXAS1, BRCC3/BRCC36, BABAM2 and BABAM1/NBA1. Component of the BRCA1-A complex, at least composed of BRCA1, BARD1, UIMC1/RAP80, ABRAXAS1, BRCC3/BRCC36, BABAM2 and BABAM1/NBA1. In the BRCA1-A complex, interacts directly with ABRAXAS1 and BABAM2. Component of the BRISC complex, at least composed of ABRAXAS2, BRCC3/BRCC36, BABAM2 and BABAM1/NBA1. Identified in a complex with SHMT2 and the other subunits of the BRISC complex. In the BRISC complex, interacts directly with ABRAXAS2. Identified in a complex with ABRAXAS2 and NUMA1. The BRISC complex interacts with the CSN complex. Component of the BRCA1/BRCA2 containing complex (BRCC), which also contains BRCA1, BRCA2, BARD1, BABAM2 and RAD51. BRCC is a ubiquitin E3 ligase complex that enhances cellular survival following DNA damage. Interacts with BRCA1. Binds polyubiquitin. Interacts with PWWP2B. Interacts with HDAC1; this interaction is enhanced in the presence of PWWP2B. It depends on Zn(2+) as a cofactor.

The protein resides in the nucleus. It is found in the cytoplasm. The protein localises to the cytoskeleton. It localises to the spindle pole. Functionally, metalloprotease that specifically cleaves 'Lys-63'-linked polyubiquitin chains. Does not have activity toward 'Lys-48'-linked polyubiquitin chains. Component of the BRCA1-A complex, a complex that specifically recognizes 'Lys-63'-linked ubiquitinated histones H2A and H2AX at DNA lesions sites, leading to target the BRCA1-BARD1 heterodimer to sites of DNA damage at double-strand breaks (DSBs). In the BRCA1-A complex, it specifically removes 'Lys-63'-linked ubiquitin on histones H2A and H2AX, antagonizing the RNF8-dependent ubiquitination at double-strand breaks (DSBs). Catalytic subunit of the BRISC complex, a multiprotein complex that specifically cleaves 'Lys-63'-linked ubiquitin in various substrates. Mediates the specific 'Lys-63'-specific deubiquitination associated with the COP9 signalosome complex (CSN), via the interaction of the BRISC complex with the CSN complex. The BRISC complex is required for normal mitotic spindle assembly and microtubule attachment to kinetochores via its role in deubiquitinating NUMA1. Plays a role in interferon signaling via its role in the deubiquitination of the interferon receptor IFNAR1; deubiquitination increases IFNAR1 activity by enhancing its stability and cell surface expression. Acts as a regulator of the NLRP3 inflammasome by mediating deubiquitination of NLRP3, leading to NLRP3 inflammasome assembly. Down-regulates the response to bacterial lipopolysaccharide (LPS) via its role in IFNAR1 deubiquitination. Deubiquitinates HDAC1 and PWWP2B leading to their stabilization. The protein is Lys-63-specific deubiquitinase BRCC36 (BRCC3) of Callithrix jacchus (White-tufted-ear marmoset).